Consider the following 490-residue polypeptide: Probable cytosol aminopeptidase (490 aa).

Positions 257 and 262 each coordinate Mn(2+). Lysine 269 is an active-site residue. Mn(2+) is bound by residues aspartate 281, aspartate 341, and glutamate 343. Arginine 345 is a catalytic residue.

The protein belongs to the peptidase M17 family. It depends on Mn(2+) as a cofactor.

It is found in the cytoplasm. The enzyme catalyses Release of an N-terminal amino acid, Xaa-|-Yaa-, in which Xaa is preferably Leu, but may be other amino acids including Pro although not Arg or Lys, and Yaa may be Pro. Amino acid amides and methyl esters are also readily hydrolyzed, but rates on arylamides are exceedingly low.. It catalyses the reaction Release of an N-terminal amino acid, preferentially leucine, but not glutamic or aspartic acids.. Functionally, presumably involved in the processing and regular turnover of intracellular proteins. Catalyzes the removal of unsubstituted N-terminal amino acids from various peptides. The protein is Probable cytosol aminopeptidase of Prochlorococcus marinus (strain AS9601).